Reading from the N-terminus, the 314-residue chain is Melanocyte-stimulating hormone receptor (314 aa).

The Extracellular portion of the chain corresponds to 1–35 (MSMLAPLRLVREPWNASEGNQSNATAGAGGAWCQG). N-linked (GlcNAc...) asparagine glycosylation is found at asparagine 15, asparagine 20, and asparagine 23. Residues 36–61 (LDIPNELFLTLGLVSLVENLLVVAAI) traverse the membrane as a helical segment. Residues 62 to 70 (LKNRNLHSP) lie on the Cytoplasmic side of the membrane. The helical transmembrane segment at 71-91 (TYYFICCLAVSDMLVSVSNLA) threads the bilayer. Over 92–116 (KTLFMLLMEHGVLVIRASIVRHMDN) the chain is Extracellular. Residues 117-138 (VIDMLICSSVVSSLSFLGVIAV) form a helical membrane-spanning segment. The Cytoplasmic segment spans residues 139-161 (DRYITIFYALRYHSIMTLQRAVV). The helical transmembrane segment at 162–181 (TMASVWLASTVSSTVLITYY) threads the bilayer. The Extracellular portion of the chain corresponds to 182–189 (RNNAILLC). A helical membrane pass occupies residues 190–209 (LIGFFLFMLVLMLVLYIHMF). Residues 210-237 (ALACHHVRSISSQQKQPTIYRTSSLKGA) are Cytoplasmic-facing. The chain crosses the membrane as a helical span at residues 238–263 (VTLTILLGVFFICWGPFFFHLILIVT). The Extracellular portion of the chain corresponds to 264–276 (CPTNPFCTCFFSY). A helical transmembrane segment spans residues 277 to 297 (FNLFLILIICNSVVDPLIYAF). Residues 298–314 (RSQELRRTLREVVLCSW) lie on the Cytoplasmic side of the membrane. Residue cysteine 312 is the site of S-palmitoyl cysteine attachment.

It belongs to the G-protein coupled receptor 1 family.

Its subcellular location is the cell membrane. Receptor for MSH (alpha, beta and gamma) and ACTH. The activity of this receptor is mediated by G proteins which activate adenylate cyclase. Mediates melanogenesis via regulation of cAMP signaling in melanocytes. The chain is Melanocyte-stimulating hormone receptor (MC1R) from Gallus gallus (Chicken).